A 245-amino-acid polypeptide reads, in one-letter code: uncharacterized protein (245 aa).

An N-terminal signal peptide occupies residues 1–20 (MIKQTIVALLLSVGASSVFA).

It to E.coli YmcB.

This is an uncharacterized protein from Escherichia coli (strain K12).